Reading from the N-terminus, the 250-residue chain is tRNA (guanine-N(1)-)-methyltransferase (250 aa).

Residues glycine 116 and 136–141 (IGDYVL) each bind S-adenosyl-L-methionine.

Belongs to the RNA methyltransferase TrmD family. As to quaternary structure, homodimer.

Its subcellular location is the cytoplasm. It carries out the reaction guanosine(37) in tRNA + S-adenosyl-L-methionine = N(1)-methylguanosine(37) in tRNA + S-adenosyl-L-homocysteine + H(+). Specifically methylates guanosine-37 in various tRNAs. In Pseudomonas putida (strain GB-1), this protein is tRNA (guanine-N(1)-)-methyltransferase.